The chain runs to 362 residues: Phospho-N-acetylmuramoyl-pentapeptide-transferase (362 aa).

The next 10 helical transmembrane spans lie at 28 to 48, 75 to 95, 100 to 120, 134 to 154, 170 to 190, 201 to 221, 241 to 261, 265 to 285, 290 to 310, and 339 to 359; these read GAVL…IAWL, TMGG…WADL, VWIV…DDYL, AKLV…WSLQ, VLLQ…VGAG, GLAI…SYLV, LAVF…FNAP, VFMG…ISVV, LVLG…IVQV, and TVVI…LATL.

The protein belongs to the glycosyltransferase 4 family. MraY subfamily. Mg(2+) is required as a cofactor.

It is found in the cell inner membrane. The catalysed reaction is UDP-N-acetyl-alpha-D-muramoyl-L-alanyl-gamma-D-glutamyl-meso-2,6-diaminopimeloyl-D-alanyl-D-alanine + di-trans,octa-cis-undecaprenyl phosphate = di-trans,octa-cis-undecaprenyl diphospho-N-acetyl-alpha-D-muramoyl-L-alanyl-D-glutamyl-meso-2,6-diaminopimeloyl-D-alanyl-D-alanine + UMP. Its pathway is cell wall biogenesis; peptidoglycan biosynthesis. In terms of biological role, catalyzes the initial step of the lipid cycle reactions in the biosynthesis of the cell wall peptidoglycan: transfers peptidoglycan precursor phospho-MurNAc-pentapeptide from UDP-MurNAc-pentapeptide onto the lipid carrier undecaprenyl phosphate, yielding undecaprenyl-pyrophosphoryl-MurNAc-pentapeptide, known as lipid I. The sequence is that of Phospho-N-acetylmuramoyl-pentapeptide-transferase from Paramagnetospirillum magneticum (strain ATCC 700264 / AMB-1) (Magnetospirillum magneticum).